The primary structure comprises 265 residues: UPF0354 protein GTNG_2723 (265 aa).

Belongs to the UPF0354 family.

The sequence is that of UPF0354 protein GTNG_2723 from Geobacillus thermodenitrificans (strain NG80-2).